Reading from the N-terminus, the 350-residue chain is C5a anaphylatoxin chemotactic receptor 1 (350 aa).

Over M1–D37 the chain is Extracellular. Positions D10–D18 are required for CHIPS binding. Y11 and Y14 each carry sulfotyrosine. The interval D21–S30 is involved in C5a binding. The helical transmembrane segment at I38 to F64 threads the bilayer. The Cytoplasmic portion of the chain corresponds to E65 to T69. Residues I70–F93 traverse the membrane as a helical segment. At T94 to R110 the chain is on the extracellular side. C109 and C188 form a disulfide bridge. A helical membrane pass occupies residues I111–A132. Over D133–A153 the chain is Cytoplasmic. The helical transmembrane segment at W154 to Y174 threads the bilayer. The Extracellular portion of the chain corresponds to R175 to R200. Residues A201–L226 traverse the membrane as a helical segment. The Cytoplasmic portion of the chain corresponds to L227 to K242. A helical transmembrane segment spans residues V243–M265. Residues S266 to D282 are Extracellular-facing. The helical transmembrane segment at S283 to A303 threads the bilayer. Over G304–V350 the chain is Cytoplasmic. Residues S314, S317, S327, S332, S334, and S338 each carry the phosphoserine modification.

Belongs to the G-protein coupled receptor 1 family. In terms of assembly, homodimer. May also form higher-order oligomers. Interacts (when phosphorylated) with ARRB1 and ARRB2; the interaction is associated with internalization of C5aR. Interacts (via N-terminal domain) with S.aureus chemotaxis inhibitory protein (CHIPS); the interaction blocks the receptor and may thus inhibit the immune response. Post-translationally, sulfation plays a critical role in the association of C5aR with C5a, but no significant role in the ability of the receptor to transduce a signal and mobilize calcium in response to a small peptide agonist. Sulfation at Tyr-14 is important for CHIPS binding. Phosphorylated on serine residues in response to C5a binding, resulting in internalization of the receptor and short-term desensitization to C5a.

The protein resides in the cell membrane. Its subcellular location is the cytoplasmic vesicle. Receptor for the chemotactic and inflammatory peptide anaphylatoxin C5a. The ligand interacts with at least two sites on the receptor: a high-affinity site on the extracellular N-terminus, and a second site in the transmembrane region which activates downstream signaling events. Receptor activation stimulates chemotaxis, granule enzyme release, intracellular calcium release and superoxide anion production. This Gorilla gorilla gorilla (Western lowland gorilla) protein is C5a anaphylatoxin chemotactic receptor 1 (C5AR1).